The sequence spans 1370 residues: DNA-directed RNA polymerase subunit beta (1370 aa).

Belongs to the RNA polymerase beta chain family. As to quaternary structure, the RNAP catalytic core consists of 2 alpha, 1 beta, 1 beta' and 1 omega subunit. When a sigma factor is associated with the core the holoenzyme is formed, which can initiate transcription.

The catalysed reaction is RNA(n) + a ribonucleoside 5'-triphosphate = RNA(n+1) + diphosphate. In terms of biological role, DNA-dependent RNA polymerase catalyzes the transcription of DNA into RNA using the four ribonucleoside triphosphates as substrates. In Polaromonas naphthalenivorans (strain CJ2), this protein is DNA-directed RNA polymerase subunit beta.